The chain runs to 256 residues: 1-(5-phosphoribosyl)-5-[(5-phosphoribosylamino)methylideneamino] imidazole-4-carboxamide isomerase (256 aa).

The active-site Proton acceptor is the aspartate 8. Aspartate 129 (proton donor) is an active-site residue.

This sequence belongs to the HisA/HisF family.

Its subcellular location is the cytoplasm. The catalysed reaction is 1-(5-phospho-beta-D-ribosyl)-5-[(5-phospho-beta-D-ribosylamino)methylideneamino]imidazole-4-carboxamide = 5-[(5-phospho-1-deoxy-D-ribulos-1-ylimino)methylamino]-1-(5-phospho-beta-D-ribosyl)imidazole-4-carboxamide. Its pathway is amino-acid biosynthesis; L-histidine biosynthesis; L-histidine from 5-phospho-alpha-D-ribose 1-diphosphate: step 4/9. This chain is 1-(5-phosphoribosyl)-5-[(5-phosphoribosylamino)methylideneamino] imidazole-4-carboxamide isomerase, found in Synechococcus sp. (strain CC9311).